The sequence spans 410 residues: Argininosuccinate synthase (410 aa).

10–18 (AYSGGLDTS) serves as a coordination point for ATP. Residues Y88 and S93 each contribute to the L-citrulline site. Residue G118 coordinates ATP. Residues T120, N124, and D125 each contribute to the L-aspartate site. Position 124 (N124) interacts with L-citrulline. Residues R128, S177, S186, E262, and Y274 each contribute to the L-citrulline site.

This sequence belongs to the argininosuccinate synthase family. Type 1 subfamily. As to quaternary structure, homotetramer.

It localises to the cytoplasm. The enzyme catalyses L-citrulline + L-aspartate + ATP = 2-(N(omega)-L-arginino)succinate + AMP + diphosphate + H(+). Its pathway is amino-acid biosynthesis; L-arginine biosynthesis; L-arginine from L-ornithine and carbamoyl phosphate: step 2/3. The protein is Argininosuccinate synthase of Caldanaerobacter subterraneus subsp. tengcongensis (strain DSM 15242 / JCM 11007 / NBRC 100824 / MB4) (Thermoanaerobacter tengcongensis).